Here is a 511-residue protein sequence, read N- to C-terminus: Bifunctional purine biosynthesis protein PurH (511 aa).

Residues 1-145 (MKKRALVSVS…KNHKFVSVIV (145 aa)) form the MGS-like domain.

Belongs to the PurH family.

It catalyses the reaction (6R)-10-formyltetrahydrofolate + 5-amino-1-(5-phospho-beta-D-ribosyl)imidazole-4-carboxamide = 5-formamido-1-(5-phospho-D-ribosyl)imidazole-4-carboxamide + (6S)-5,6,7,8-tetrahydrofolate. It carries out the reaction IMP + H2O = 5-formamido-1-(5-phospho-D-ribosyl)imidazole-4-carboxamide. The protein operates within purine metabolism; IMP biosynthesis via de novo pathway; 5-formamido-1-(5-phospho-D-ribosyl)imidazole-4-carboxamide from 5-amino-1-(5-phospho-D-ribosyl)imidazole-4-carboxamide (10-formyl THF route): step 1/1. It functions in the pathway purine metabolism; IMP biosynthesis via de novo pathway; IMP from 5-formamido-1-(5-phospho-D-ribosyl)imidazole-4-carboxamide: step 1/1. This chain is Bifunctional purine biosynthesis protein PurH, found in Bacillus thuringiensis (strain Al Hakam).